We begin with the raw amino-acid sequence, 172 residues long: Adenine phosphoribosyltransferase (172 aa).

It belongs to the purine/pyrimidine phosphoribosyltransferase family. As to quaternary structure, homodimer.

Its subcellular location is the cytoplasm. It catalyses the reaction AMP + diphosphate = 5-phospho-alpha-D-ribose 1-diphosphate + adenine. The protein operates within purine metabolism; AMP biosynthesis via salvage pathway; AMP from adenine: step 1/1. In terms of biological role, catalyzes a salvage reaction resulting in the formation of AMP, that is energically less costly than de novo synthesis. The sequence is that of Adenine phosphoribosyltransferase from Clostridium tetani (strain Massachusetts / E88).